Consider the following 232-residue polypeptide: 5'-methylthioadenosine/S-adenosylhomocysteine nucleosidase (232 aa).

Glu-12 acts as the Proton acceptor in catalysis. Residues Gly-78, Ile-152, and 173-174 (ME) contribute to the substrate site. Catalysis depends on Asp-197, which acts as the Proton donor.

It belongs to the PNP/UDP phosphorylase family. MtnN subfamily. Homodimer.

The enzyme catalyses S-adenosyl-L-homocysteine + H2O = S-(5-deoxy-D-ribos-5-yl)-L-homocysteine + adenine. It catalyses the reaction S-methyl-5'-thioadenosine + H2O = 5-(methylsulfanyl)-D-ribose + adenine. The catalysed reaction is 5'-deoxyadenosine + H2O = 5-deoxy-D-ribose + adenine. Its pathway is amino-acid biosynthesis; L-methionine biosynthesis via salvage pathway; S-methyl-5-thio-alpha-D-ribose 1-phosphate from S-methyl-5'-thioadenosine (hydrolase route): step 1/2. Functionally, catalyzes the irreversible cleavage of the glycosidic bond in both 5'-methylthioadenosine (MTA) and S-adenosylhomocysteine (SAH/AdoHcy) to adenine and the corresponding thioribose, 5'-methylthioribose and S-ribosylhomocysteine, respectively. Also cleaves 5'-deoxyadenosine, a toxic by-product of radical S-adenosylmethionine (SAM) enzymes, into 5-deoxyribose and adenine. Thus, is required for in vivo function of the radical SAM enzymes biotin synthase and lipoic acid synthase, that are inhibited by 5'-deoxyadenosine accumulation. In Erwinia tasmaniensis (strain DSM 17950 / CFBP 7177 / CIP 109463 / NCPPB 4357 / Et1/99), this protein is 5'-methylthioadenosine/S-adenosylhomocysteine nucleosidase.